Reading from the N-terminus, the 465-residue chain is Glutamate--tRNA ligase 1 (465 aa).

A 'HIGH' region motif is present at residues proline 8–asparagine 18. The 'KMSKS' region motif lies at proline 249 to arginine 253. Position 252 (lysine 252) interacts with ATP.

Belongs to the class-I aminoacyl-tRNA synthetase family. Glutamate--tRNA ligase type 1 subfamily. Monomer.

Its subcellular location is the cytoplasm. The catalysed reaction is tRNA(Glu) + L-glutamate + ATP = L-glutamyl-tRNA(Glu) + AMP + diphosphate. Catalyzes the attachment of glutamate to tRNA(Glu) in a two-step reaction: glutamate is first activated by ATP to form Glu-AMP and then transferred to the acceptor end of tRNA(Glu). The sequence is that of Glutamate--tRNA ligase 1 from Coxiella burnetii (strain CbuG_Q212) (Coxiella burnetii (strain Q212)).